Reading from the N-terminus, the 156-residue chain is Small ribosomal subunit protein uS7c (156 aa).

It belongs to the universal ribosomal protein uS7 family. Part of the 30S ribosomal subunit.

The protein localises to the plastid. Its subcellular location is the cyanelle. Its function is as follows. One of the primary rRNA binding proteins, it binds directly to 16S rRNA where it nucleates assembly of the head domain of the 30S subunit. The polypeptide is Small ribosomal subunit protein uS7c (rps7) (Cyanophora paradoxa).